A 305-amino-acid chain; its full sequence is Heterogeneous nuclear ribonucleoprotein A0 (305 aa).

Met-1 is modified (N-acetylmethionine). An RRM 1 domain is found at Cys-7–Glu-86. Residue Ser-68 is modified to Phosphoserine. Lys-80 participates in a covalent cross-link: Glycyl lysine isopeptide (Lys-Gly) (interchain with G-Cter in SUMO2). Phosphoserine; by MAPKAPK2 is present on Ser-84. Glycyl lysine isopeptide (Lys-Gly) (interchain with G-Cter in SUMO2) cross-links involve residues Lys-96, Lys-98, Lys-99, and Lys-106. One can recognise an RRM 2 domain in the interval Lys-98–Pro-175. Lys-133 carries the N6-acetyllysine modification. Residue Arg-139 is modified to Omega-N-methylarginine. Residues Lys-154, Lys-159, Lys-172, and Lys-176 each participate in a glycyl lysine isopeptide (Lys-Gly) (interchain with G-Cter in SUMO2) cross-link. 2 disordered regions span residues Asp-178–Asn-211 and Gln-265–Phe-305. Gly residues-rich tracts occupy residues Ala-181–Asn-211 and Lys-272–Gly-284. Residue Arg-286 is modified to Omega-N-methylarginine. The segment covering Tyr-292–Phe-305 has biased composition (gly residues). Position 293 is an asymmetric dimethylarginine; alternate (Arg-293). A Dimethylated arginine; alternate modification is found at Arg-293. Arg-293 is subject to Omega-N-methylarginine; alternate.

Post-translationally, phosphorylated at Ser-84 by MAPKAPK2 in response to LPS treatment, promoting stabilization of GADD45A mRNA. Arg-293 is dimethylated, probably to asymmetric dimethylarginine.

The protein resides in the nucleus. MRNA-binding component of ribonucleosomes. Specifically binds AU-rich element (ARE)-containing mRNAs. Involved in post-transcriptional regulation of cytokines mRNAs. This chain is Heterogeneous nuclear ribonucleoprotein A0 (Hnrnpa0), found in Mus musculus (Mouse).